We begin with the raw amino-acid sequence, 85 residues long: Toxin Cll6 (85 aa).

Residues 1–19 (MNSLLMIIGCLVLIGTVWT) form the signal peptide. The 64-residue stretch at 20–83 (KEGYLVNMKT…TWPLPGKSCS (64 aa)) folds into the LCN-type CS-alpha/beta domain. Cystine bridges form between Cys-31/Cys-82, Cys-35/Cys-58, Cys-44/Cys-63, and Cys-48/Cys-65. The residue at position 83 (Ser-83) is a Serine amide.

This sequence belongs to the long (4 C-C) scorpion toxin superfamily. Sodium channel inhibitor family. Beta subfamily. As to expression, expressed by the venom gland.

It localises to the secreted. Its function is as follows. Beta toxins bind voltage-independently at site-4 of sodium channels (Nav) and shift the voltage of activation toward more negative potentials thereby affecting sodium channel activation and promoting spontaneous and repetitive firing. The protein is Toxin Cll6 of Centruroides limpidus (Mexican scorpion).